The following is a 504-amino-acid chain: Beta-glucosidase 24 (504 aa).

The first 18 residues, Met1–Ser18, serve as a signal peptide directing secretion. Gln47 contacts a beta-D-glucoside. Asn75 carries N-linked (GlcNAc...) asparagine glycosylation. A beta-D-glucoside contacts are provided by residues His151 and Asn196–Glu197. The Proton donor role is filled by Glu197. Cys216 and Cys224 form a disulfide bridge. Asn329 carries an N-linked (GlcNAc...) asparagine glycan. Tyr340 is a binding site for a beta-D-glucoside. Asn371 carries an N-linked (GlcNAc...) asparagine glycan. Position 411 (Glu411) interacts with a beta-D-glucoside. Catalysis depends on Glu411, which acts as the Nucleophile. Asn421 carries an N-linked (GlcNAc...) asparagine glycan. A beta-D-glucoside is bound by residues Trp460, Glu467–Trp468, and Phe476.

Belongs to the glycosyl hydrolase 1 family.

It carries out the reaction Hydrolysis of terminal, non-reducing beta-D-glucosyl residues with release of beta-D-glucose.. This Oryza sativa subsp. japonica (Rice) protein is Beta-glucosidase 24 (BGLU24).